The primary structure comprises 257 residues: NAD-capped RNA hydrolase NudC (257 aa).

Arginine 69 lines the substrate pocket. Zn(2+) contacts are provided by cysteine 98 and cysteine 101. A substrate-binding site is contributed by glutamate 111. 2 residues coordinate Zn(2+): cysteine 116 and cysteine 119. A substrate-binding site is contributed by tyrosine 124. One can recognise a Nudix hydrolase domain in the interval 125-248 (PQIAPCIIVA…TVARRLIEDT (124 aa)). A divalent metal cation contacts are provided by alanine 158, glutamate 174, and glutamate 178. The Nudix box motif lies at 159–180 (GFVEVGETLEQAVAREVMEESG). Residue 192–199 (QPWPFPQS) participates in substrate binding. Glutamate 219 serves as a coordination point for a divalent metal cation. Alanine 241 contacts substrate.

The protein belongs to the Nudix hydrolase family. NudC subfamily. As to quaternary structure, homodimer. The cofactor is Mg(2+). Mn(2+) serves as cofactor. Requires Zn(2+) as cofactor.

The catalysed reaction is a 5'-end NAD(+)-phospho-ribonucleoside in mRNA + H2O = a 5'-end phospho-adenosine-phospho-ribonucleoside in mRNA + beta-nicotinamide D-ribonucleotide + 2 H(+). The enzyme catalyses NAD(+) + H2O = beta-nicotinamide D-ribonucleotide + AMP + 2 H(+). It catalyses the reaction NADH + H2O = reduced beta-nicotinamide D-ribonucleotide + AMP + 2 H(+). Its function is as follows. mRNA decapping enzyme that specifically removes the nicotinamide adenine dinucleotide (NAD) cap from a subset of mRNAs by hydrolyzing the diphosphate linkage to produce nicotinamide mononucleotide (NMN) and 5' monophosphate mRNA. The NAD-cap is present at the 5'-end of some mRNAs and stabilizes RNA against 5'-processing. Has preference for mRNAs with a 5'-end purine. Catalyzes the hydrolysis of a broad range of dinucleotide pyrophosphates. This chain is NAD-capped RNA hydrolase NudC, found in Citrobacter koseri (strain ATCC BAA-895 / CDC 4225-83 / SGSC4696).